Here is a 401-residue protein sequence, read N- to C-terminus: GRIP domain-containing protein C119.12 (401 aa).

A coiled-coil region spans residues 7 to 296 (NETKLVENEN…TLLIGKLQHE (290 aa)). A GRIP domain is found at 315–366 (NNAEKIDKQLISNLFVSFLTLPRADTKRFEILQLISSVLDWNDTQREQTGLQ).

It is found in the golgi apparatus lumen. In Schizosaccharomyces pombe (strain 972 / ATCC 24843) (Fission yeast), this protein is GRIP domain-containing protein C119.12.